Reading from the N-terminus, the 232-residue chain is 7-cyano-7-deazaguanine synthase (232 aa).

An ATP-binding site is contributed by 8 to 18 (FSGGQDSTTCL). Zn(2+) is bound by residues C187, C196, C199, and C202.

The protein belongs to the QueC family. Zn(2+) is required as a cofactor.

It carries out the reaction 7-carboxy-7-deazaguanine + NH4(+) + ATP = 7-cyano-7-deazaguanine + ADP + phosphate + H2O + H(+). It functions in the pathway purine metabolism; 7-cyano-7-deazaguanine biosynthesis. Its function is as follows. Catalyzes the ATP-dependent conversion of 7-carboxy-7-deazaguanine (CDG) to 7-cyano-7-deazaguanine (preQ(0)). The sequence is that of 7-cyano-7-deazaguanine synthase from Vibrio parahaemolyticus serotype O3:K6 (strain RIMD 2210633).